Consider the following 275-residue polypeptide: Large ribosomal subunit protein uL2 (275 aa).

The tract at residues 222 to 275 (GVAMNPVDHPHGGGEGRNKGRHPTSPWGQKSKGLKTRHNKRTDNMIIRRRAKKK) is disordered. Basic and acidic residues predominate over residues 229 to 239 (DHPHGGGEGRN).

This sequence belongs to the universal ribosomal protein uL2 family. As to quaternary structure, part of the 50S ribosomal subunit. Forms a bridge to the 30S subunit in the 70S ribosome.

Functionally, one of the primary rRNA binding proteins. Required for association of the 30S and 50S subunits to form the 70S ribosome, for tRNA binding and peptide bond formation. It has been suggested to have peptidyltransferase activity; this is somewhat controversial. Makes several contacts with the 16S rRNA in the 70S ribosome. The polypeptide is Large ribosomal subunit protein uL2 (Psychrobacter cryohalolentis (strain ATCC BAA-1226 / DSM 17306 / VKM B-2378 / K5)).